Here is a 271-residue protein sequence, read N- to C-terminus: MKKKLKTFSLILLTGSLLVACGRGEVSSHSATLWEQIVYAFAKSIQWLSFNHSIGLGIILFTLIIRAIMMPLYNMQMKSSQKMQEIQPRLKELQKKYPGKDPDNRLKLNDEMQSMYKAEGVNPYASVLPLLIQLPVLWALFQALTRVSFLKVGTFLSLELSQPDPYYILPVLAALFTFLSTWLTNKAAVEKNIALTLMTYVMPFIILVTSFNFASGVVLYWTVSNAFQVFQILLLNNPYKIIKVREEAVRVAHEKEQRVKRAKRKASKKRK.

A signal peptide spans M1–A20. A lipid anchor (N-palmitoyl cysteine) is attached at C21. The S-diacylglycerol cysteine moiety is linked to residue C21. The next 4 membrane-spanning stretches (helical) occupy residues I45–I65, Y124–L144, P163–L183, and V201–W221.

This sequence belongs to the OXA1/ALB3/YidC family. Type 2 subfamily.

It localises to the cell membrane. Its function is as follows. Required for the insertion and/or proper folding and/or complex formation of integral membrane proteins into the membrane. Involved in integration of membrane proteins that insert both dependently and independently of the Sec translocase complex, as well as at least some lipoproteins. The chain is Membrane protein insertase YidC 1 from Streptococcus agalactiae serotype V (strain ATCC BAA-611 / 2603 V/R).